A 131-amino-acid polypeptide reads, in one-letter code: Small ribosomal subunit protein uS11 (131 aa).

Belongs to the universal ribosomal protein uS11 family. In terms of assembly, part of the 30S ribosomal subunit. Interacts with proteins S7 and S18. Binds to IF-3.

Its function is as follows. Located on the platform of the 30S subunit, it bridges several disparate RNA helices of the 16S rRNA. Forms part of the Shine-Dalgarno cleft in the 70S ribosome. The polypeptide is Small ribosomal subunit protein uS11 (Natranaerobius thermophilus (strain ATCC BAA-1301 / DSM 18059 / JW/NM-WN-LF)).